The following is an 840-amino-acid chain: Probable alpha-glucuronidase A (840 aa).

Residues Met-1–Ala-19 form the signal peptide. N-linked (GlcNAc...) asparagine glycosylation is found at Asn-50, Asn-149, Asn-222, Asn-262, Asn-279, Asn-310, Asn-465, Asn-527, Asn-576, Asn-610, Asn-682, Asn-723, and Asn-732.

It belongs to the glycosyl hydrolase 67 family.

Its subcellular location is the secreted. It catalyses the reaction an alpha-D-glucuronoside + H2O = D-glucuronate + an alcohol. Alpha-glucuronidase involved in the hydrolysis of xylan, a major structural heterogeneous polysaccharide found in plant biomass representing the second most abundant polysaccharide in the biosphere, after cellulose. Releases 4-O-methylglucuronic acid from xylan. In Neosartorya fischeri (strain ATCC 1020 / DSM 3700 / CBS 544.65 / FGSC A1164 / JCM 1740 / NRRL 181 / WB 181) (Aspergillus fischerianus), this protein is Probable alpha-glucuronidase A (aguA).